A 685-amino-acid polypeptide reads, in one-letter code: Protein arginine N-methyltransferase 7 (685 aa).

SAM-dependent MTase PRMT-type domains follow at residues Gln14–Trp355 and Ala364–Ile685.

This sequence belongs to the class I-like SAM-binding methyltransferase superfamily. Protein arginine N-methyltransferase family. PRMT7 subfamily.

Its function is as follows. Essential arginine methyltransferase that can both catalyze the formation of omega-N monomethylarginine (MMA) and symmetrical dimethylarginine (sDMA). Specifically mediates the symmetrical dimethylation of arginine residues in the small nuclear ribonucleoproteins SmD1 and SmD3. This chain is Protein arginine N-methyltransferase 7 (Art7), found in Drosophila willistoni (Fruit fly).